Here is a 657-residue protein sequence, read N- to C-terminus: Histidine ammonia-lyase (657 aa).

The segment at residues alanine 253 to glycine 255 is a cross-link (5-imidazolinone (Ala-Gly)). Residue serine 254 is modified to 2,3-didehydroalanine (Ser). At threonine 396 the chain carries Phosphothreonine. Position 635 is a phosphoserine (serine 635). Phosphothreonine is present on threonine 637. Serine 648 bears the Phosphoserine mark.

It belongs to the PAL/histidase family. Contains an active site 4-methylidene-imidazol-5-one (MIO), which is formed autocatalytically by cyclization and dehydration of residues Ala-Ser-Gly. In terms of tissue distribution, liver and skin.

The enzyme catalyses L-histidine = trans-urocanate + NH4(+). Its pathway is amino-acid degradation; L-histidine degradation into L-glutamate; N-formimidoyl-L-glutamate from L-histidine: step 1/3. The sequence is that of Histidine ammonia-lyase (Hal) from Rattus norvegicus (Rat).